The following is a 490-amino-acid chain: Betaine aldehyde dehydrogenase (490 aa).

3 residues coordinate K(+): Thr-26, Ile-27, and Asp-93. 150–152 serves as a coordination point for NAD(+); that stretch reads GAW. Lys-162 functions as the Charge relay system in the catalytic mechanism. Position 176 to 179 (176 to 179) interacts with NAD(+); that stretch reads KPSE. Residue Val-180 participates in K(+) binding. NAD(+) is bound at residue 230–233; the sequence is GVAS. Leu-246 serves as a coordination point for K(+). Glu-252 (proton acceptor) is an active-site residue. NAD(+)-binding residues include Gly-254, Cys-286, and Glu-387. Cys-286 functions as the Nucleophile in the catalytic mechanism. The residue at position 286 (Cys-286) is a Cysteine sulfenic acid (-SOH). The K(+) site is built by Lys-457 and Gly-460. Glu-464 (charge relay system) is an active-site residue.

This sequence belongs to the aldehyde dehydrogenase family. Dimer of dimers. Requires K(+) as cofactor.

It catalyses the reaction betaine aldehyde + NAD(+) + H2O = glycine betaine + NADH + 2 H(+). It participates in amine and polyamine biosynthesis; betaine biosynthesis via choline pathway; betaine from betaine aldehyde: step 1/1. Involved in the biosynthesis of the osmoprotectant glycine betaine. Catalyzes the irreversible oxidation of betaine aldehyde to the corresponding acid. In Escherichia coli O45:K1 (strain S88 / ExPEC), this protein is Betaine aldehyde dehydrogenase.